The sequence spans 345 residues: MASSSNYDGILLGMGNPLLDISAVVDDEFLTKYDIKLNNAILAEDKHLPMYDEMSSKFNVEYIAGGATQNSIKVAQWMLQIPGATSYMGSIGKDKYGEAMKKDATAAGVNVHYYEDESAPTGTCGVCVVGGERSLIANLSAANCYKVDHLKKPENWALVEKAKFYYIAGFFLTVSPESIQLVSEHAAANNKVFTMNLSAPFICEFFKDVQEKFLPYMDFVFGNETEARTFSRVHGWETEDVEQIAIKISQLPKATGTYKRTTVITQGADPVVVAEDGKVKKYPVIPLPKEKLVDTNGAGDAFVGGFMSQLVKEKSIEECVKAGCYASNVVIQRSGCTYPEKPDFN.

Residue Asp-300 is part of the active site.

The protein belongs to the carbohydrate kinase PfkB family. Interacts with the begomovirus AL2 protein and the curtovirus L2 protein. Interacts with KIN11. Mg(2+) is required as a cofactor. Phosphorylated by KIN11. As to expression, widely expressed.

It localises to the cytoplasm. It carries out the reaction adenosine + ATP = AMP + ADP + H(+). Its pathway is purine metabolism; AMP biosynthesis via salvage pathway; AMP from adenosine: step 1/1. Inactivated by the begomovirus AL2 protein or the curtovirus L2 protein. Functionally, ATP dependent phosphorylation of adenosine and other related nucleoside analogs to monophosphate derivatives. Essential to sustain methyl recycling. The sequence is that of Adenosine kinase 2 from Arabidopsis thaliana (Mouse-ear cress).